A 179-amino-acid chain; its full sequence is Transcription factor 21 (179 aa).

Residues 23–87 (IKLDPNKEFG…QVQRNAANAR (65 aa)) are disordered. Positions 34–46 (SNDSNEESSTCDN) are enriched in polar residues. Basic residues predominate over residues 50 to 64 (KKGRGTSGKRRKAPS). A compositionally biased stretch (polar residues) spans 70 to 80 (GNINQEGKQVQ). Positions 79–131 (VQRNAANARERARMRVLSKAFSRLKTTLPWVPPDTKLSKLDTLRLASSYIAHL) constitute a bHLH domain.

As to quaternary structure, efficient DNA binding requires dimerization with another bHLH protein.

It is found in the nucleus. Functionally, involved in epithelial-mesenchymal interactions in kidney and lung morphogenesis that include epithelial differentiation and branching morphogenesis. The chain is Transcription factor 21 (tcf21) from Xenopus tropicalis (Western clawed frog).